The chain runs to 461 residues: Putative ankyrin repeat protein FPV218 (461 aa).

ANK repeat units follow at residues 1–28 (MLSLYYAINYKNRKMVERLLREGVHPDS), 31–61 (KGFYRPLVKSILLRDVDLVSILLQNGANPNN), 65–94 (ETVSPLAIAIKVNSPTIVSLLLDYNADTSL), 96–116 (PLYVSFPIIKVLVYHGIDVNV), 120–149 (ESRSFLHYAAKNDDVDTVISLILHGANVNV), 153–182 (KGLSPLHHAVSKKTTLTAKILLENGARVNI), 186–213 (LGRLPLHLGANTYEMVKLLIDYGSPIDI), 217–248 (NGSTPLHYAIWKSSLDTIRLLVNVSTINALDN), 250–277 (CNSPLHYIILSETEILVELLLRGADITI), 281–312 (CGNTPLDILCKLRIKKLDNIKAIISNAFLMRE), 358–385 (NGPTILDVCTDKVHFLHRLVNARDNVQY), and 431–460 (LPYELKHYIIEYINIEFIKSLLEHTNLKNK).

This Fowlpox virus (strain NVSL) (FPV) protein is Putative ankyrin repeat protein FPV218.